We begin with the raw amino-acid sequence, 121 residues long: Large ribosomal subunit protein uL18 (121 aa).

It belongs to the universal ribosomal protein uL18 family. In terms of assembly, part of the 50S ribosomal subunit; part of the 5S rRNA/L5/L18/L25 subcomplex. Contacts the 5S and 23S rRNAs.

In terms of biological role, this is one of the proteins that bind and probably mediate the attachment of the 5S RNA into the large ribosomal subunit, where it forms part of the central protuberance. This Thermoanaerobacter pseudethanolicus (strain ATCC 33223 / 39E) (Clostridium thermohydrosulfuricum) protein is Large ribosomal subunit protein uL18.